Here is a 527-residue protein sequence, read N- to C-terminus: T-complex protein 1 subunit beta (527 aa).

This sequence belongs to the TCP-1 chaperonin family. Heterooligomeric complex of about 850 to 900 kDa that forms two stacked rings, 12 to 16 nm in diameter.

Its subcellular location is the cytoplasm. Molecular chaperone; assists the folding of proteins upon ATP hydrolysis. Known to play a role, in vitro, in the folding of actin and tubulin. This chain is T-complex protein 1 subunit beta, found in Arabidopsis thaliana (Mouse-ear cress).